We begin with the raw amino-acid sequence, 137 residues long: Type III secretion protein HrcQb (137 aa).

Residues 1-22 (MSTEDLYQDDVESLEDYDDETA) show a composition bias toward acidic residues. The interval 1 to 67 (MSTEDLYQDD…EQQAPSGLDS (67 aa)) is disordered. Over residues 23–33 (EQEHEHEHEQQ) the composition is skewed to basic and acidic residues. Residues 36–58 (EPDDESEYAEAEPDDDEQEEQEE) are compositionally biased toward acidic residues.

This sequence belongs to the FliN/MopA/SpaO family. In terms of assembly, homotetramer. The four monomers assemble into two tightly bound homodimers. Interacts with HrcQa.

It is found in the cytoplasm. Functionally, component of the type III secretion system, which is required for effector protein delivery, parasitism, and pathogenicity. Probably participates in the formation of a C-ring-like assembly along with HrcQa. The chain is Type III secretion protein HrcQb (hrcQb) from Pseudomonas syringae pv. tomato (strain ATCC BAA-871 / DC3000).